Reading from the N-terminus, the 864-residue chain is Leucine--tRNA ligase (864 aa).

The short motif at proline 42 to histidine 52 is the 'HIGH' region element. The 'KMSKS' region signature appears at lysine 624–serine 628. Lysine 627 is a binding site for ATP.

The protein belongs to the class-I aminoacyl-tRNA synthetase family.

It localises to the cytoplasm. The catalysed reaction is tRNA(Leu) + L-leucine + ATP = L-leucyl-tRNA(Leu) + AMP + diphosphate. The chain is Leucine--tRNA ligase from Burkholderia thailandensis (strain ATCC 700388 / DSM 13276 / CCUG 48851 / CIP 106301 / E264).